The primary structure comprises 381 residues: Succinyl-diaminopimelate desuccinylase (381 aa).

Residue His-70 coordinates Zn(2+). Residue Asp-72 is part of the active site. A Zn(2+)-binding site is contributed by Asp-103. The active-site Proton acceptor is the Glu-136. 3 residues coordinate Zn(2+): Glu-137, Glu-165, and His-354.

It belongs to the peptidase M20A family. DapE subfamily. In terms of assembly, homodimer. The cofactor is Zn(2+). It depends on Co(2+) as a cofactor.

The catalysed reaction is N-succinyl-(2S,6S)-2,6-diaminopimelate + H2O = (2S,6S)-2,6-diaminopimelate + succinate. Its pathway is amino-acid biosynthesis; L-lysine biosynthesis via DAP pathway; LL-2,6-diaminopimelate from (S)-tetrahydrodipicolinate (succinylase route): step 3/3. In terms of biological role, catalyzes the hydrolysis of N-succinyl-L,L-diaminopimelic acid (SDAP), forming succinate and LL-2,6-diaminopimelate (DAP), an intermediate involved in the bacterial biosynthesis of lysine and meso-diaminopimelic acid, an essential component of bacterial cell walls. This Roseobacter denitrificans (strain ATCC 33942 / OCh 114) (Erythrobacter sp. (strain OCh 114)) protein is Succinyl-diaminopimelate desuccinylase.